We begin with the raw amino-acid sequence, 289 residues long: MASTKEIRSKIKSVQNTRKITKAMEMVAASKMRRAQERMRNARPYAEKIREIVANLSKANPGFRPAYMATREVKKVGTILVTTDKGLCGGLNTNVLRLIANQVRDLQEKNIEIAYTAIGSKGLQFLNRSKAKLISQTIQIGDIPHMDVLIGAIVSQLEAFERGEIDAVYLAYTRFVNAMKQEPVLEKLLPLESEALTPQEKTGNSWDYICEPDAESILNGLLKRYVEAMIYQAVAENMASEQSARMVSMKAASDNAKNVIGELQLDYNKTRQAAITKELSEIVGGAAAV.

Belongs to the ATPase gamma chain family. In terms of assembly, F-type ATPases have 2 components, CF(1) - the catalytic core - and CF(0) - the membrane proton channel. CF(1) has five subunits: alpha(3), beta(3), gamma(1), delta(1), epsilon(1). CF(0) has three main subunits: a, b and c.

Its subcellular location is the cell inner membrane. In terms of biological role, produces ATP from ADP in the presence of a proton gradient across the membrane. The gamma chain is believed to be important in regulating ATPase activity and the flow of protons through the CF(0) complex. The protein is ATP synthase gamma chain of Polynucleobacter necessarius subsp. necessarius (strain STIR1).